The sequence spans 109 residues: Thiosulfate sulfurtransferase GlpE (109 aa).

The Rhodanese domain occupies 17–105 (HQQTAVLVDI…WHRHFPAEVA (89 aa)). The active-site Cysteine persulfide intermediate is C65.

The protein belongs to the GlpE family.

It localises to the cytoplasm. The catalysed reaction is thiosulfate + hydrogen cyanide = thiocyanate + sulfite + 2 H(+). It carries out the reaction thiosulfate + [thioredoxin]-dithiol = [thioredoxin]-disulfide + hydrogen sulfide + sulfite + 2 H(+). Functionally, transferase that catalyzes the transfer of sulfur from thiosulfate to thiophilic acceptors such as cyanide or dithiols. May function in a CysM-independent thiosulfate assimilation pathway by catalyzing the conversion of thiosulfate to sulfite, which can then be used for L-cysteine biosynthesis. The chain is Thiosulfate sulfurtransferase GlpE from Klebsiella pneumoniae subsp. pneumoniae (strain ATCC 700721 / MGH 78578).